The chain runs to 323 residues: MSKIPAPDEKTSRSDSGSSILRKPDWLRVRSPGGAAFNETHGLIRKLGLATVCEEAACPNIGECWTKKQATVMILGEVCTRACAFCNVKTGHPDKVNPLEPGHVADVAAEMNLEHIVITSVDRDDLEDGGASQFVKVIEAVRARTPKTTIEILTPDFRGKPDHALDMIVKARPDVFNHNLETVPRLYPTIRPGARYFTSLRLLEKVRERDPSIFTKSGLMLGLGEDRLEVHQVMDDMRQADVDFLTLGQYLQPTPRHVRVEEFVTPDSFKAYAATARAKGFSMVASSPLTRSSYYAGADFARLKEARQKKLEKIAAKNSGKGA.

The [4Fe-4S] cluster site is built by cysteine 53, cysteine 58, cysteine 64, cysteine 79, cysteine 83, cysteine 86, and serine 293. The region spanning 65-282 (WTKKQATVMI…AATARAKGFS (218 aa)) is the Radical SAM core domain.

The protein belongs to the radical SAM superfamily. Lipoyl synthase family. It depends on [4Fe-4S] cluster as a cofactor.

The protein resides in the cytoplasm. It carries out the reaction [[Fe-S] cluster scaffold protein carrying a second [4Fe-4S](2+) cluster] + N(6)-octanoyl-L-lysyl-[protein] + 2 oxidized [2Fe-2S]-[ferredoxin] + 2 S-adenosyl-L-methionine + 4 H(+) = [[Fe-S] cluster scaffold protein] + N(6)-[(R)-dihydrolipoyl]-L-lysyl-[protein] + 4 Fe(3+) + 2 hydrogen sulfide + 2 5'-deoxyadenosine + 2 L-methionine + 2 reduced [2Fe-2S]-[ferredoxin]. The protein operates within protein modification; protein lipoylation via endogenous pathway; protein N(6)-(lipoyl)lysine from octanoyl-[acyl-carrier-protein]: step 2/2. Functionally, catalyzes the radical-mediated insertion of two sulfur atoms into the C-6 and C-8 positions of the octanoyl moiety bound to the lipoyl domains of lipoate-dependent enzymes, thereby converting the octanoylated domains into lipoylated derivatives. The protein is Lipoyl synthase of Zymomonas mobilis subsp. mobilis (strain ATCC 31821 / ZM4 / CP4).